The chain runs to 613 residues: tRNA 5-methylaminomethyl-2-thiouridine biosynthesis bifunctional protein MnmC (613 aa).

A tRNA (mnm(5)s(2)U34)-methyltransferase region spans residues 1–225; that stretch reads MKKAKLIFKD…KREMIKAYLE (225 aa). An FAD-dependent cmnm(5)s(2)U34 oxidoreductase region spans residues 252–613; sequence IGAGISSAVL…FLIRKLKKGL (362 aa).

In the N-terminal section; belongs to the methyltransferase superfamily. tRNA (mnm(5)s(2)U34)-methyltransferase family. This sequence in the C-terminal section; belongs to the DAO family. It depends on FAD as a cofactor.

It is found in the cytoplasm. The enzyme catalyses 5-aminomethyl-2-thiouridine(34) in tRNA + S-adenosyl-L-methionine = 5-methylaminomethyl-2-thiouridine(34) in tRNA + S-adenosyl-L-homocysteine + H(+). Its function is as follows. Catalyzes the last two steps in the biosynthesis of 5-methylaminomethyl-2-thiouridine (mnm(5)s(2)U) at the wobble position (U34) in tRNA. Catalyzes the FAD-dependent demodification of cmnm(5)s(2)U34 to nm(5)s(2)U34, followed by the transfer of a methyl group from S-adenosyl-L-methionine to nm(5)s(2)U34, to form mnm(5)s(2)U34. The chain is tRNA 5-methylaminomethyl-2-thiouridine biosynthesis bifunctional protein MnmC from Campylobacter jejuni (strain RM1221).